We begin with the raw amino-acid sequence, 142 residues long: Large ribosomal subunit protein uL11 (142 aa).

Belongs to the universal ribosomal protein uL11 family. Part of the ribosomal stalk of the 50S ribosomal subunit. Interacts with L10 and the large rRNA to form the base of the stalk. L10 forms an elongated spine to which L12 dimers bind in a sequential fashion forming a multimeric L10(L12)X complex. In terms of processing, one or more lysine residues are methylated.

Forms part of the ribosomal stalk which helps the ribosome interact with GTP-bound translation factors. This is Large ribosomal subunit protein uL11 from Shewanella halifaxensis (strain HAW-EB4).